A 286-amino-acid chain; its full sequence is Phosphoribosylaminoimidazole-succinocarboxamide synthase (286 aa).

It belongs to the SAICAR synthetase family.

The catalysed reaction is 5-amino-1-(5-phospho-D-ribosyl)imidazole-4-carboxylate + L-aspartate + ATP = (2S)-2-[5-amino-1-(5-phospho-beta-D-ribosyl)imidazole-4-carboxamido]succinate + ADP + phosphate + 2 H(+). It participates in purine metabolism; IMP biosynthesis via de novo pathway; 5-amino-1-(5-phospho-D-ribosyl)imidazole-4-carboxamide from 5-amino-1-(5-phospho-D-ribosyl)imidazole-4-carboxylate: step 1/2. The sequence is that of Phosphoribosylaminoimidazole-succinocarboxamide synthase from Actinobacillus succinogenes (strain ATCC 55618 / DSM 22257 / CCUG 43843 / 130Z).